Reading from the N-terminus, the 736-residue chain is 1,4-alpha-glucan branching enzyme GlgB (736 aa).

D415 acts as the Nucleophile in catalysis. E470 functions as the Proton donor in the catalytic mechanism.

Belongs to the glycosyl hydrolase 13 family. GlgB subfamily. As to quaternary structure, monomer.

The enzyme catalyses Transfers a segment of a (1-&gt;4)-alpha-D-glucan chain to a primary hydroxy group in a similar glucan chain.. It functions in the pathway glycan biosynthesis; glycogen biosynthesis. Functionally, catalyzes the formation of the alpha-1,6-glucosidic linkages in glycogen by scission of a 1,4-alpha-linked oligosaccharide from growing alpha-1,4-glucan chains and the subsequent attachment of the oligosaccharide to the alpha-1,6 position. This Burkholderia cenocepacia (strain HI2424) protein is 1,4-alpha-glucan branching enzyme GlgB.